A 336-amino-acid chain; its full sequence is HTH-type transcriptional repressor PurR (336 aa).

The HTH lacI-type domain maps to 2–56; the sequence is ATIKDVAKMAGVSTTTVSHVINKTRFVAKDTEEAVLSAIKQLNYSPSAVARSLKV. A DNA-binding region (H-T-H motif) is located at residues 4-23; the sequence is IKDVAKMAGVSTTTVSHVIN. A DNA-binding region spans residues 48–56; it reads SAVARSLKV. Tyr73, Lys188, Thr190, Phe219, and Asp273 together coordinate hypoxanthine.

Homodimer.

It functions in the pathway purine metabolism; purine nucleotide biosynthesis [regulation]. Its function is as follows. Is the main repressor of the genes involved in the de novo synthesis of purine nucleotides, regulating purB, purC, purEK, purF, purHD, purL, purMN and guaBA expression. PurR is allosterically activated to bind its cognate DNA by binding the purine corepressors, hypoxanthine or guanine, thereby effecting transcription repression. The polypeptide is HTH-type transcriptional repressor PurR (Haemophilus influenzae (strain ATCC 51907 / DSM 11121 / KW20 / Rd)).